The sequence spans 102 residues: Large ribosomal subunit protein bL21 (102 aa).

The protein belongs to the bacterial ribosomal protein bL21 family. In terms of assembly, part of the 50S ribosomal subunit. Contacts protein L20.

This protein binds to 23S rRNA in the presence of protein L20. This chain is Large ribosomal subunit protein bL21, found in Campylobacter jejuni subsp. doylei (strain ATCC BAA-1458 / RM4099 / 269.97).